The sequence spans 555 residues: Transcriptional adapter 2b (555 aa).

Residues 8–63 (FTKYNCTNCQDDIQGIRVHCAECENFDLCLQCFAAGAEIGAHQNNHSYQFMDTGTS) form a ZZ-type zinc finger. Residues Cys-13, Cys-16, Cys-27, Cys-30, Cys-36, Cys-39, His-49, and His-53 each contribute to the Zn(2+) site. Positions 69-121 (RGKGAWTAREEIRLLDAIEQYGFGNWEDISKHIETKSAEDAKEEYVNKFVNGT) constitute an SANT domain. The disordered stretch occupies residues 318–372 (THRSTGPYGHGKTDHTHTSNGSHRPPSSSLHSPQPNLRKVEMSSGGEASSNSIAP). Over residues 339 to 352 (SHRPPSSSLHSPQP) the composition is skewed to low complexity. Positions 363–372 (GEASSNSIAP) are enriched in polar residues.

Component of histone acetyltransferase complexes containing Gcn5 and Ada3. In terms of assembly, can heterooligomerize with Isoform A. Component of the Spt-Ada-Gcn5 acetyltransferase (SAGA) complex consisting of Ada1, Ada2b (Isoform B), Ada3, wda, Saf6, Spt3, Spt7, Spt20, Taf9, Taf10b, Taf12, Nipped-A/Tra1, Sf3b3, Sf3b5, not/nonstop, Sgf11, Sgf29, e(y)2, Atxn7 and Gcn5. Taf5 and Taf10, which has partially redundant properties with Taf10b, may also be part of this complex. Interacts (via C-terminus) with Spt3 and Taf12; the interactions are direct. Interacts with Ada3; the interaction is probably direct. May also interact directly with Spt7 and Gcn5. Interacts with p53. As to quaternary structure, can heterooligomerize with Isoform B. Component of the Chiffon histone acetyltransferase (CHAT) complex consisting of Ada3, Sgf29, Gcn5, chif/chiffon and Ada2b (Isoform A). Interacts (via N-terminus) with Gcn5 and Ada3; the interaction is direct. Can interact directly with Spt7 in vitro but in vivo this interaction is not stable probably due to the absence of other SAGA components. Interacts with p53. In terms of tissue distribution, expressed in nurse cells of stage 10 egg chambers and transcripts are dumped into the oocyte when nurse cells degenerate at late oogenesis.

The protein resides in the nucleus. In terms of biological role, component of several Gcn5-containing histone acetyltransferase complexes that regulate nucleosome organization; involved in acetylation of histone H3, particularly on Lys-10 (H3K9ac) and Lys-15 (H3K14ac). Regulates the transcription of a subset of genes during development; affects recruitment of RNA polymerase II. May be involved in the function of some acidic activation domains, which activate transcription at distant sites. Involved in the p53-dependent apoptosis pathway response to DNA damage by genotoxic agents. Its function is as follows. Component of the SAGA histone acetyltransferase complex, which predominantly acetylates histone H3. Component of the CHAT histone acetyltransferase complex, which predominantly acetylates histone H3. This is Transcriptional adapter 2b from Drosophila melanogaster (Fruit fly).